A 201-amino-acid polypeptide reads, in one-letter code: MQAFTTHTGLAVAIDSANIDTDQIIPKQFLSKVTKDGFGIHLFHDWRYLDDAGDIPNPEFNLNKPRYKGATILLAQENFGCGSSREHAPWALADFGLRAIIAPTFADIFYGNAINNGLLPVRLPEAAVRQLMDEVEANEGAEVTVDLENLKVVSPSGAEFSFTLAESARQNLLKGLDAIGLTLAHEAAISEYESRIPAWRR.

It belongs to the LeuD family. LeuD type 1 subfamily. In terms of assembly, heterodimer of LeuC and LeuD.

It catalyses the reaction (2R,3S)-3-isopropylmalate = (2S)-2-isopropylmalate. It functions in the pathway amino-acid biosynthesis; L-leucine biosynthesis; L-leucine from 3-methyl-2-oxobutanoate: step 2/4. In terms of biological role, catalyzes the isomerization between 2-isopropylmalate and 3-isopropylmalate, via the formation of 2-isopropylmaleate. The polypeptide is 3-isopropylmalate dehydratase small subunit (Shewanella amazonensis (strain ATCC BAA-1098 / SB2B)).